A 190-amino-acid polypeptide reads, in one-letter code: CASP-like protein 1E2 (190 aa).

Positions 1–12 (MENEGKNNMNGM) are enriched in low complexity. The disordered stretch occupies residues 1-24 (MENEGKNNMNGMEMEKGKRESRSR). The Cytoplasmic portion of the chain corresponds to 1 to 28 (MENEGKNNMNGMEMEKGKRESRSRKGVE). Over residues 13-24 (EMEKGKRESRSR) the composition is skewed to basic and acidic residues. The helical transmembrane segment at 29-49 (LTMRVLALVLTMAAATVLGVA) threads the bilayer. Over 50–83 (KQTKVVSIKLIPALPPLDITTTAKASYLSAFVYN) the chain is Extracellular. A helical transmembrane segment spans residues 84 to 104 (ISANAIACGYTAISIAILMIS). Topologically, residues 105–111 (RGRRSKK) are cytoplasmic. A helical transmembrane segment spans residues 112–132 (LLMAVLLGDLVMVALLFSGTG). The Extracellular portion of the chain corresponds to 133–163 (AASAIGLMGLQGNKHVMWNKVCGVFGKFCHR). A helical transmembrane segment spans residues 164–184 (AAPSLPLTFLAAVVFMFLVVL). Over 185–190 (DAIKLP) the chain is Cytoplasmic.

This sequence belongs to the Casparian strip membrane proteins (CASP) family. In terms of assembly, homodimer and heterodimers.

Its subcellular location is the cell membrane. The polypeptide is CASP-like protein 1E2 (Arabidopsis lyrata subsp. lyrata (Lyre-leaved rock-cress)).